Consider the following 417-residue polypeptide: Serine hydroxymethyltransferase (417 aa).

Residues L121 and 125 to 127 (GHL) each bind (6S)-5,6,7,8-tetrahydrofolate. Position 229 is an N6-(pyridoxal phosphate)lysine (K229). (6S)-5,6,7,8-tetrahydrofolate is bound at residue 355–357 (SPF).

This sequence belongs to the SHMT family. As to quaternary structure, homodimer. Pyridoxal 5'-phosphate is required as a cofactor.

The protein resides in the cytoplasm. It carries out the reaction (6R)-5,10-methylene-5,6,7,8-tetrahydrofolate + glycine + H2O = (6S)-5,6,7,8-tetrahydrofolate + L-serine. Its pathway is one-carbon metabolism; tetrahydrofolate interconversion. The protein operates within amino-acid biosynthesis; glycine biosynthesis; glycine from L-serine: step 1/1. Catalyzes the reversible interconversion of serine and glycine with tetrahydrofolate (THF) serving as the one-carbon carrier. This reaction serves as the major source of one-carbon groups required for the biosynthesis of purines, thymidylate, methionine, and other important biomolecules. Also exhibits THF-independent aldolase activity toward beta-hydroxyamino acids, producing glycine and aldehydes, via a retro-aldol mechanism. The chain is Serine hydroxymethyltransferase from Salmonella choleraesuis (strain SC-B67).